Consider the following 100-residue polypeptide: ATP synthase subunit c (100 aa).

The next 2 helical transmembrane spans lie at Leu-30–Met-50 and Ala-80–Val-100.

Belongs to the ATPase C chain family. F-type ATPases have 2 components, F(1) - the catalytic core - and F(0) - the membrane proton channel. F(1) has five subunits: alpha(3), beta(3), gamma(1), delta(1), epsilon(1). F(0) has three main subunits: a(1), b(2) and c(10-14). The alpha and beta chains form an alternating ring which encloses part of the gamma chain. F(1) is attached to F(0) by a central stalk formed by the gamma and epsilon chains, while a peripheral stalk is formed by the delta and b chains.

It is found in the cell inner membrane. Functionally, f(1)F(0) ATP synthase produces ATP from ADP in the presence of a proton or sodium gradient. F-type ATPases consist of two structural domains, F(1) containing the extramembraneous catalytic core and F(0) containing the membrane proton channel, linked together by a central stalk and a peripheral stalk. During catalysis, ATP synthesis in the catalytic domain of F(1) is coupled via a rotary mechanism of the central stalk subunits to proton translocation. In terms of biological role, key component of the F(0) channel; it plays a direct role in translocation across the membrane. A homomeric c-ring of between 10-14 subunits forms the central stalk rotor element with the F(1) delta and epsilon subunits. The sequence is that of ATP synthase subunit c from Aquifex aeolicus (strain VF5).